The following is a 974-amino-acid chain: Short transient receptor potential channel 4 (974 aa).

Topologically, residues 1–324 (MAQFYYKRNV…YDEFPGWRRR (324 aa)) are cytoplasmic. ANK repeat units lie at residues 29–60 (LSPS…IYFK), 71–93 (RTAL…LSFN), 96–118 (VGDA…LLNH), and 141–165 (PDIT…VQKG). The interval 87–172 (ELLLSFNVYV…QKGVSVPRPH (86 aa)) is multimerization domain. Zn(2+)-binding residues include His172, Cys176, Cys178, and Cys181. Residues 223 to 260 (LSWELQELSKVENEFKSEYEELSRQCKQFAKDLLDQTR) are a coiled coil. Residues 254-304 (DLLDQTRSSRELEIILNYRDDNSLIEEQSGNDLARLKLAIKYRQKEFVAQP) form a multimerization domain region. Positions 325–359 (HWAVKMVTCFIIGLLFPVFSVCYLIAPKSPLGLFI) form an intramembrane region, discontinuously helical. Over 360–362 (RKP) the chain is Cytoplasmic. A helical membrane pass occupies residues 363 to 383 (FIKFICHTASYLTFLFLLLLA). Residues 384–403 (SQHIDRSDLNRQGPPPTIVE) are Extracellular-facing. A helical membrane pass occupies residues 404–418 (WMILPWVLGFIWGEI). Glu417, Gln420, Asn435, and Asp438 together coordinate Ca(2+). Residues 419-432 (KQMWDGGLQDYIHD) lie on the Cytoplasmic side of the membrane. Residues 433–453 (WWNLMDFVMNSLYLATISLKI) traverse the membrane as a helical segment. Over 454-475 (VAFVKYSALNPRESWDMWHPTL) the chain is Extracellular. The helical transmembrane segment at 476 to 498 (VAEALFAIANIFSSLRLISLFTA) threads the bilayer. Residues 499–511 (NSHLGPLQISLGR) lie on the Cytoplasmic side of the membrane. A helical transmembrane segment spans residues 512–534 (MLLDILKFLFIYCLVLLAFANGL). Residues 535–599 (NQLYFYYEET…HEFTEFVGAT (65 aa)) lie on the Extracellular side of the membrane. Cys549 and Cys554 are joined by a disulfide. Residues 600–620 (MFGTYNVISLVVLLNMLIAMM) traverse the membrane as a helical segment. The segment at 615–974 (MLIAMMNNSY…AHEDYVTTRL (360 aa)) is interaction with ITPR1, ITPR2 and ITPR3. Residues 621–974 (NNSYQLIADH…AHEDYVTTRL (354 aa)) lie on the Cytoplasmic side of the membrane. The interval 765–787 (ANAASSADSDEKSQSEGNGKDKR) is disordered. A compositionally biased stretch (basic and acidic residues) spans 773–784 (SDEKSQSEGNGK). Residues Tyr956 and Tyr969 each carry the phosphotyrosine; by FYN modification. The PDZ-binding domain stretch occupies residues 972–974 (TRL).

Belongs to the transient receptor (TC 1.A.4) family. STrpC subfamily. TRPC4 sub-subfamily. In terms of assembly, homotetramer. Heterotetramer with TRPC1 and/or TRPC5. Forms a heteromeric ion channel with TRPC1, with a 1:3 TRPC1:TRPC4 stoichiometry. Interacts with TRPC4AP. Isoform alpha but not isoform beta interacts with ITPR1, ITPR2 and ITPR3. Interacts with NHERF1. Interacts with MX1 and RNF24. Interacts (via CIRB domain) with SESTD1 (via the spectrin 1 repeat) and SPTBN5 (via C-terminus). Interacts with CDH5 and CTNNB1. Interacts (via protein 4.1-binding domain) with EPB41L2. Interacts with PLSCR1. As to expression, abundantly expressed in brain (hippocampal CA1 pyramidal neurons, dentate gyrus granule cells, and cerebral cortical neurons, and in the septal nuclei and the mitral layer of olfactory bulb). Lower levels are detected in other tissues.

It localises to the cell membrane. The enzyme catalyses Ca(2+)(in) = Ca(2+)(out). The catalysed reaction is Na(+)(in) = Na(+)(out). It carries out the reaction Li(+)(in) = Li(+)(out). It catalyses the reaction Cs(+)(in) = Cs(+)(out). May be operated by a phosphatidylinositol second messenger system activated by receptor tyrosine kinases or G-protein coupled receptors. May be activated by intracellular calcium store depletion. Its function is as follows. Forms a receptor-activated non-selective calcium permeant cation channel. Acts as a cell-cell contact-dependent endothelial calcium entry channel. Forms a homomeric ion channel or a heteromeric ion channel with TRPC1; the heteromeric ion channel has reduced calcium permeability compared to the homomeric channel. Also permeable to monovalent ions including sodium, lithium and cesium ions. This Mus musculus (Mouse) protein is Short transient receptor potential channel 4 (Trpc4).